Reading from the N-terminus, the 154-residue chain is Prefoldin subunit 5 (154 aa).

Alanine 2 is modified (N-acetylalanine). N6-acetyllysine is present on lysine 42. Serine 56 carries the post-translational modification Phosphoserine.

Belongs to the prefoldin subunit alpha family. In terms of assembly, heterohexamer of two PFD-alpha type and four PFD-beta type subunits. Binds to MYC; interacts with its N-terminal domain. As to expression, highly expressed in pancreas and skeletal muscle and moderately in other tissues.

It localises to the nucleus. The protein resides in the cytoplasm. Functionally, binds specifically to cytosolic chaperonin (c-CPN) and transfers target proteins to it. Binds to nascent polypeptide chain and promotes folding in an environment in which there are many competing pathways for nonnative proteins. Represses the transcriptional activity of MYC. The protein is Prefoldin subunit 5 (PFDN5) of Homo sapiens (Human).